The chain runs to 985 residues: NAD kinase 2, chloroplastic (985 aa).

A chloroplast-targeting transit peptide spans 1-62 (MFLCFCPCHV…KRRLRFVIRA (62 aa)). The calmodulin-binding stretch occupies residues 335–380 (APKAEQVELFASIVSDSSKRPIYVHSKEGVWRTSAMVSRWKQYMTR). Disordered regions lie at residues 389-466 (SEES…PPGN) and 548-615 (FSNG…DEAG). Basic and acidic residues-rich tracts occupy residues 390–399 (EESKRREVSE) and 413–429 (VPDE…EVDS). Residues 548–569 (FSNGNVHASDNTNKSISDNRGN) show a composition bias toward polar residues.

It belongs to the NAD kinase family. As to expression, expressed in leaves.

The protein resides in the plastid. Its subcellular location is the chloroplast. It catalyses the reaction NAD(+) + ATP = ADP + NADP(+) + H(+). Functionally, involved in chlorophyll synthesis and chloroplast protection against oxidative damage. This Arabidopsis thaliana (Mouse-ear cress) protein is NAD kinase 2, chloroplastic (NADK2).